A 294-amino-acid chain; its full sequence is Protein C3orf33 (294 aa).

A2 bears the N-acetylalanine mark. A helical membrane pass occupies residues 40-56 (ISTGMAIAGIMLLLRSI).

As to expression, highly expressed in ileocecal tissue and endometrium.

Its subcellular location is the membrane. It is found in the secreted. In terms of biological role, secreted protein may play a role in transcription regulation via the MAPK3/MAPK1 pathway through an unidentified receptor on the plasma membrane. This is Protein C3orf33 (C3orf33) from Homo sapiens (Human).